The sequence spans 218 residues: Carnitine transport permease protein OpuCB (218 aa).

The ABC transmembrane type-1 domain maps to 19-198; that stretch reads TWQHLFISLS…ILALVVEFAL (180 aa). Transmembrane regions (helical) follow at residues 23-43, 48-68, 79-101, 149-169, and 179-199; these read LFIS…TGIL, PKVA…PSLA, VGTL…RNTF, VIAW…DFIF, and LILG…FALG.

It belongs to the binding-protein-dependent transport system permease family. In terms of assembly, the complex is composed of two ATP-binding proteins (OpuCA), two transmembrane proteins (OpuCB and OpuCD) and a solute-binding protein (OpuCC).

The protein localises to the cell membrane. In terms of biological role, part of the ABC transporter complex OpuCABCD involved in carnitine uptake. Probably responsible for the translocation of the substrate across the membrane. Involved, with BetL and GbuABC, in osmoprotection and cryoprotection of Listeria. This Listeria monocytogenes protein is Carnitine transport permease protein OpuCB (opuCB).